Reading from the N-terminus, the 113-residue chain is U11-theraphotoxin-Hhn1t (113 aa).

A signal peptide spans 1-21 (MNTVRVTFLLVFVLAVSLGQA). Residues 22–74 (DKDENRMEMQEKTEQGKSYLDFAENLLLQKLEELEAKLLEEDSEESRNSRQKR) constitute a propeptide that is removed on maturation. Over residues 60–69 (LEEDSEESRN) the composition is skewed to basic and acidic residues. Residues 60–83 (LEEDSEESRNSRQKRCIGEGVPCD) are disordered. 3 disulfide bridges follow: Cys-75–Cys-90, Cys-82–Cys-95, and Cys-89–Cys-110.

The protein belongs to the neurotoxin 14 (magi-1) family. 01 (HNTX-16) subfamily. In terms of tissue distribution, expressed by the venom gland.

The protein resides in the secreted. In terms of biological role, probable ion channel inhibitor. The polypeptide is U11-theraphotoxin-Hhn1t (Cyriopagopus hainanus (Chinese bird spider)).